The chain runs to 199 residues: MARCKS-related protein (199 aa).

Residues 1-199 are disordered; the sequence is MGSQSSKAPR…PTPAGAEQNE (199 aa). Glycine 2 carries N-myristoyl glycine lipidation. Threonine 14 carries the post-translational modification Phosphothreonine. Low complexity predominate over residues 16 to 26; that stretch reads EEAAGASPAKA. Phosphoserine is present on residues serine 22, serine 36, and serine 48. Residues 53 to 64 are compositionally biased toward low complexity; sequence GTDEAAGATGDA. Serine 71 carries the phosphoserine modification. The segment covering 76 to 85 has biased composition (basic and acidic residues); it reads AKGDAPPKET. Threonine 85 carries the post-translational modification Phosphothreonine. Residues 86 to 98 are compositionally biased toward basic residues; the sequence is PKKKKKFSFKKPF. An effector domain involved in lipid-binding and calmodulin-binding region spans residues 87–110; sequence KKKKKFSFKKPFKLSGLSFKRNRK. Phosphoserine; by PKC occurs at positions 93, 101, and 104. Phosphoserine is present on serine 119. Position 120 is a phosphoserine; by MAPK8 (serine 120). Residue serine 135 is modified to Phosphoserine. At threonine 148 the chain carries Phosphothreonine; by MAPK8. Serine 151 is subject to Phosphoserine. The span at 156 to 167 shows a compositional bias: low complexity; that stretch reads AKGAEAGAACKG. Position 170 is a phosphothreonine (threonine 170). The segment covering 181–199 has biased composition (low complexity); it reads STPSGPESGPTPAGAEQNE. Threonine 182 is subject to Phosphothreonine; by MAPK8. Residue threonine 191 is modified to Phosphothreonine.

It belongs to the MARCKS family. As to quaternary structure, binds to filamentous actin (F-actin), but not to monomeric G-actin, independently of its phosphorylation status. Interacts with calmodulin. Phosphorylated. Phosphorylation at Ser-120 and Thr-182 is non-redundantly catalyzed by MAPK8 in vivo. Phosphorylation at Thr-148 is preferentially catalyzed by MAPK8 in vivo, but this modification can also be catalyzed by other kinases in the absence of MAPK8. May be phosphorylated by protein kinase C, which disrupts the interaction with calmodulin.

It is found in the cytoplasm. Its subcellular location is the cytoskeleton. The protein localises to the cell membrane. Functionally, controls cell movement by regulating actin cytoskeleton homeostasis and filopodium and lamellipodium formation. When unphosphorylated, induces cell migration. When phosphorylated by MAPK8, induces actin bundles formation and stabilization, thereby reducing actin plasticity, hence restricting cell movement, including neuronal migration. May be involved in coupling the protein kinase C and calmodulin signal transduction systems. The protein is MARCKS-related protein (MARCKSL1) of Oryctolagus cuniculus (Rabbit).